A 413-amino-acid polypeptide reads, in one-letter code: Dual-specificity RNA methyltransferase RlmN (413 aa).

Residue Glu126 is the Proton acceptor of the active site. A Radical SAM core domain is found at 132–381 (EEGRGTLCIS…IRTPRGRDIL (250 aa)). Cys139 and Cys384 are oxidised to a cystine. 3 residues coordinate [4Fe-4S] cluster: Cys146, Cys150, and Cys153. S-adenosyl-L-methionine contacts are provided by residues 210 to 211 (GE), Ser242, 264 to 266 (SLH), and Asn341. The active-site S-methylcysteine intermediate is Cys384.

It belongs to the radical SAM superfamily. RlmN family. [4Fe-4S] cluster serves as cofactor.

The protein resides in the cytoplasm. The catalysed reaction is adenosine(2503) in 23S rRNA + 2 reduced [2Fe-2S]-[ferredoxin] + 2 S-adenosyl-L-methionine = 2-methyladenosine(2503) in 23S rRNA + 5'-deoxyadenosine + L-methionine + 2 oxidized [2Fe-2S]-[ferredoxin] + S-adenosyl-L-homocysteine. The enzyme catalyses adenosine(37) in tRNA + 2 reduced [2Fe-2S]-[ferredoxin] + 2 S-adenosyl-L-methionine = 2-methyladenosine(37) in tRNA + 5'-deoxyadenosine + L-methionine + 2 oxidized [2Fe-2S]-[ferredoxin] + S-adenosyl-L-homocysteine. Its function is as follows. Specifically methylates position 2 of adenine 2503 in 23S rRNA and position 2 of adenine 37 in tRNAs. m2A2503 modification seems to play a crucial role in the proofreading step occurring at the peptidyl transferase center and thus would serve to optimize ribosomal fidelity. The sequence is that of Dual-specificity RNA methyltransferase RlmN from Sinorhizobium medicae (strain WSM419) (Ensifer medicae).